We begin with the raw amino-acid sequence, 382 residues long: Aminotransferase FGSG_00049 (382 aa).

Arg80 is a binding site for pyridoxal 5'-phosphate. An N6-(pyridoxal phosphate)lysine modification is found at Lys181. Glu217 serves as a coordination point for pyridoxal 5'-phosphate.

The protein belongs to the class-IV pyridoxal-phosphate-dependent aminotransferase family. Pyridoxal 5'-phosphate is required as a cofactor.

It functions in the pathway mycotoxin biosynthesis. Its function is as follows. Aminotransferase; part of the gene cluster that mediates the biosynthesis of gramillins A and B, bicyclic lipopeptides that induce cell death in maize leaves but not in wheat leaves. The nonribosomal peptide synthetase GRA1 incorporates respectively a glutamic adic (Glu), a leucine (Leu), a serine (Ser), a hydroxyglutamine (HOGln), a 2-amino decanoic acid, and 2 cysteins (CysB and CysA). The biosynthesis of 2-amino decanoic acid incorporated in gramillins could be initiated by a fatty acid synthase composed of the alpha and beta subunits FGSG_00036 and FGSG_11656. The cytochrome P450 monooxygenase FGSG_15680 could hydroxylate the fatty acid chain. Subsequent oxidation to the ketone by the oxidoreductase FGSG_00048 and transamination by aminotransferase FGSG_00049 could form 2-amino-decanoic acid. On the other hand, FGSG_15680 could also be responsible for the HO-modified glutamine at the gamma-position. Whether hydroxylation occurs on the fully assembled product or on the Gln residue prior to assembly into the gramillins requires further proof. The thioredoxin FGSG_00043 could also be required for the disulfide-bond formation between CysA and CysB. The specific involvement of the remaining proteins from the cluster is more difficult to discern, but could have broader regulatory (FGSG_00040 and FGSG_11657) or enzymatic functions (FGSG_00044 and FGSG_00045). The final C-domain of GRA1 does not possess the expected sequence of a termination CT domain, often implicated in macrocyclization and release of a cyclopeptidein fungal NRPs; and the thioesterase FGSG_00047 may act in concert with the terminal C-domain of GRA1 to catalyze the formation of the macrocyclic anhydride and release of the products. The protein is Aminotransferase FGSG_00049 of Gibberella zeae (strain ATCC MYA-4620 / CBS 123657 / FGSC 9075 / NRRL 31084 / PH-1) (Wheat head blight fungus).